The sequence spans 172 residues: RNA pyrophosphohydrolase (172 aa).

Residues 6–149 (GFRANVGIII…KRDVYRKVMK (144 aa)) enclose the Nudix hydrolase domain. The Nudix box signature appears at 38 to 59 (GGLDDGESAEEAMYRELYEEVG).

The protein belongs to the Nudix hydrolase family. RppH subfamily. A divalent metal cation is required as a cofactor.

Its function is as follows. Accelerates the degradation of transcripts by removing pyrophosphate from the 5'-end of triphosphorylated RNA, leading to a more labile monophosphorylated state that can stimulate subsequent ribonuclease cleavage. This is RNA pyrophosphohydrolase from Shewanella denitrificans (strain OS217 / ATCC BAA-1090 / DSM 15013).